Here is a 473-residue protein sequence, read N- to C-terminus: Myocyte-specific enhancer factor 2C (473 aa).

The MADS-box domain occupies 3–57 (RKKIQITRIMDERNRQVTFTKRKFGLMKKAYELSVLCDCEIALIIFNSTNKLFQY). N6-acetyllysine is present on Lys4. Residues 58 to 86 (ASTDMDKVLLKYTEYNEPHESRTNSDIVE) constitute a DNA-binding region (mef2-type). Phosphoserine; by CK2 is present on Ser59. Residues 91–116 (KGLNGCDSPDPDADDSVGHSPESEDK) are disordered. A phosphoserine mark is found at Ser98, Ser106, and Ser110. Lys116 and Lys119 each carry N6-acetyllysine. The interval 180 to 224 (NSMSPGVTHRPPSAGNTGGLMGGDLTSGAGTSAGNGYGNPRNSPG) is disordered. 2 positions are modified to phosphoserine: Ser222 and Ser228. An N6-acetyllysine mark is found at Lys234 and Lys239. A Phosphoserine modification is found at Ser240. An N6-acetyllysine mark is found at Lys252 and Lys264. Residues 271–278 (SEDVDLLL) form a beta domain region. Residues Thr293 and Thr300 each carry the phosphothreonine; by MAPK14 modification. The segment at 368-399 (ACTSTHLSQSSNLSLPSTQSLNIKSEPVSPPR) is transcription repressor. Residues 375–390 (SQSSNLSLPSTQSLNI) are compositionally biased toward polar residues. Residues 375–473 (SQSSNLSLPS…RMRLSEGWAT (99 aa)) form a disordered region. Residue Lys391 forms a Glycyl lysine isopeptide (Lys-Gly) (interchain with G-Cter in SUMO) linkage. Ser396 is modified (phosphoserine; by CDK5). Ser419 bears the Phosphoserine; by MAPK7 mark. Positions 419–432 (SPVDSLSSCSSSYD) are enriched in low complexity. Positions 433–443 (GSDREDHRNEF) are enriched in basic and acidic residues. The residue at position 445 (Ser445) is a Phosphoserine.

It belongs to the MEF2 family. In terms of assembly, forms a complex with class II HDACs in undifferentiating cells. On myogenic differentiation, HDACs are released into the cytoplasm allowing MEF2s to interact with other proteins for activation. Interacts with EP300 in differentiating cells; the interaction acetylates MEF2C leading to increased DNA binding and activation. Interacts with HDAC7 and CARM1. Interacts with HDAC4 and HDAC9; the interaction with HDACs represses transcriptional activity. Interacts with LPIN1. Interacts with MYOCD. Interacts with AKAP13. Interacts with FOXK1; the interaction inhibits MEF2C transactivation activity. Interacts (via N-terminus) with HABP4; this interaction decreases DNA-binding activity of MEF2C in myocardial cells in response to mechanical stress. Interacts with JPH2; interaction specifically takes place with the Junctophilin-2 N-terminal fragment cleavage product of JPH2. Interacts (via MADS box) with SOX18. Interacts with PHF7; the interaction promotes MEF2C binding to its transcription targets. Phosphorylation on Ser-59 enhances DNA binding activity. Phosphorylation on Ser-396 is required for Lys-391 sumoylation and inhibits transcriptional activity. In terms of processing, acetylated by p300 on several sites in diffentiating myocytes. Acetylation on Lys-4 increases DNA binding and transactivation. Post-translationally, sumoylated on Lys-391 with SUMO2 but not by SUMO1 represses transcriptional activity. Proteolytically cleaved in cerebellar granule neurons, probably by caspase 7, following neurotoxicity. Preferentially cleaves the CDK5-mediated hyperphosphorylated form which leads to neuron apoptosis and transcriptional inactivation. In terms of tissue distribution, expressed in brain and skeletal muscle.

It is found in the nucleus. It localises to the cytoplasm. The protein localises to the sarcoplasm. Transcription activator which binds specifically to the MEF2 element present in the regulatory regions of many muscle-specific genes. Controls cardiac morphogenesis and myogenesis, and is also involved in vascular development. Enhances transcriptional activation mediated by SOX18. Plays an essential role in hippocampal-dependent learning and memory by suppressing the number of excitatory synapses and thus regulating basal and evoked synaptic transmission. Crucial for normal neuronal development, distribution, and electrical activity in the neocortex. Necessary for proper development of megakaryocytes and platelets and for bone marrow B-lymphopoiesis. Required for B-cell survival and proliferation in response to BCR stimulation, efficient IgG1 antibody responses to T-cell-dependent antigens and for normal induction of germinal center B-cells. May also be involved in neurogenesis and in the development of cortical architecture. Isoforms that lack the repressor domain are more active than isoform 1. The polypeptide is Myocyte-specific enhancer factor 2C (Homo sapiens (Human)).